A 275-amino-acid chain; its full sequence is Small ribosomal subunit protein uS2 (275 aa).

The tract at residues 244–275 (REGAEASKKKATVKKKAAPRAASGESAEAAAE) is disordered. The segment covering 252–261 (KKATVKKKAA) has biased composition (basic residues). The segment covering 262-275 (PRAASGESAEAAAE) has biased composition (low complexity).

Belongs to the universal ribosomal protein uS2 family.

The polypeptide is Small ribosomal subunit protein uS2 (Thioalkalivibrio sulfidiphilus (strain HL-EbGR7)).